The following is a 261-amino-acid chain: Proteasome subunit beta type-2 (261 aa).

Residues Met-1–Gly-29 constitute a propeptide, removed in mature form. Thr-30 (nucleophile) is an active-site residue.

The protein belongs to the peptidase T1B family. As to quaternary structure, the 26S proteasome consists of a 20S proteasome core and two 19S regulatory subunits. The 20S proteasome core is composed of 28 subunits that are arranged in four stacked rings, resulting in a barrel-shaped structure. The two end rings are each formed by seven alpha subunits, and the two central rings are each formed by seven beta subunits. The catalytic chamber with the active sites is on the inside of the barrel.

The protein localises to the cytoplasm. Its subcellular location is the nucleus. It carries out the reaction Cleavage of peptide bonds with very broad specificity.. Functionally, the proteasome degrades poly-ubiquitinated proteins in the cytoplasm and in the nucleus. It is essential for the regulated turnover of proteins and for the removal of misfolded proteins. The proteasome is a multicatalytic proteinase complex that is characterized by its ability to cleave peptides with Arg, Phe, Tyr, Leu, and Glu adjacent to the leaving group at neutral or slightly basic pH. It has an ATP-dependent proteolytic activity. This Saccharomyces cerevisiae (strain ATCC 204508 / S288c) (Baker's yeast) protein is Proteasome subunit beta type-2 (PUP1).